Consider the following 200-residue polypeptide: NADH-quinone oxidoreductase subunit C (200 aa).

This sequence belongs to the complex I 30 kDa subunit family. In terms of assembly, NDH-1 is composed of 14 different subunits. Subunits NuoB, C, D, E, F, and G constitute the peripheral sector of the complex.

The protein localises to the cell inner membrane. The enzyme catalyses a quinone + NADH + 5 H(+)(in) = a quinol + NAD(+) + 4 H(+)(out). Its function is as follows. NDH-1 shuttles electrons from NADH, via FMN and iron-sulfur (Fe-S) centers, to quinones in the respiratory chain. The immediate electron acceptor for the enzyme in this species is believed to be ubiquinone. Couples the redox reaction to proton translocation (for every two electrons transferred, four hydrogen ions are translocated across the cytoplasmic membrane), and thus conserves the redox energy in a proton gradient. The chain is NADH-quinone oxidoreductase subunit C from Rhizobium etli (strain ATCC 51251 / DSM 11541 / JCM 21823 / NBRC 15573 / CFN 42).